The following is a 345-amino-acid chain: Ryncolin-4 (345 aa).

The first 19 residues, 1-19 (MKPWAAFHLIFLVASSLEG), serve as a signal peptide directing secretion. Positions 48–118 (ILQSQPGIPG…DKGDKGEDCN (71 aa)) are disordered. The Collagen-like domain occupies 57–114 (GIPGVPGTNGSEGLKGDPGPQGPPGIRGPDGIRGEAGPKGDKGDQGDKGDKGDKGDKG). Residues 86–116 (DGIRGEAGPKGDKGDQGDKGDKGDKGDKGED) are compositionally biased toward basic and acidic residues. In terms of domain architecture, Fibrinogen C-terminal spans 121–339 (DCLPTEVRNC…YADMKIRPQK (219 aa)). 2 disulfide bridges follow: Cys130–Cys158 and Cys282–Cys295.

It belongs to the ficolin lectin family. Veficolin subfamily. Post-translationally, hydroxylated, possibly at Pro-80. As to expression, expressed by the venom duct.

The protein resides in the secreted. Initiates complement activation and/or interferes in platelet aggregation and/or blood coagulation. This is Ryncolin-4 from Cerberus rynchops (Dog-faced water snake).